A 116-amino-acid polypeptide reads, in one-letter code: Toxin ICK-10 (116 aa).

The signal sequence occupies residues 1–19; sequence MMKLYSLVIIATLAAAAFA. Intrachain disulfides connect C56–C71, C64–C77, C68–C113, and C70–C84.

The protein belongs to the neurotoxin 25 family. ICK-8 subfamily. Expressed by the venom gland.

It is found in the secreted. In terms of biological role, ion channel inhibitor. The chain is Toxin ICK-10 from Trittame loki (Brush-footed trapdoor spider).